Here is a 368-residue protein sequence, read N- to C-terminus: Flavanone 3-dioxygenase (368 aa).

Residues 191–295 form the Fe2OG dioxygenase domain; that stretch reads CVDMDQKVIV…RMSIATFQNP (105 aa). Residues H218, D220, and H276 each contribute to the Fe cation site. R286 contributes to the 2-oxoglutarate binding site.

Belongs to the iron/ascorbate-dependent oxidoreductase family. Fe(2+) serves as cofactor. The cofactor is L-ascorbate.

It carries out the reaction a (2S)-flavan-4-one + 2-oxoglutarate + O2 = a (2R,3R)-dihydroflavonol + succinate + CO2. The protein operates within secondary metabolite biosynthesis; flavonoid biosynthesis. In terms of biological role, involved in the conversion of (2S)-naringenin to (+)-(2R/3R)-dihydrokaempferol. The polypeptide is Flavanone 3-dioxygenase (FHT) (Petroselinum crispum (Parsley)).